We begin with the raw amino-acid sequence, 271 residues long: Tryptophan synthase alpha chain (271 aa).

Active-site proton acceptor residues include E49 and D60.

The protein belongs to the TrpA family. As to quaternary structure, tetramer of two alpha and two beta chains.

It catalyses the reaction (1S,2R)-1-C-(indol-3-yl)glycerol 3-phosphate + L-serine = D-glyceraldehyde 3-phosphate + L-tryptophan + H2O. Its pathway is amino-acid biosynthesis; L-tryptophan biosynthesis; L-tryptophan from chorismate: step 5/5. Its function is as follows. The alpha subunit is responsible for the aldol cleavage of indoleglycerol phosphate to indole and glyceraldehyde 3-phosphate. In Yersinia pestis bv. Antiqua (strain Angola), this protein is Tryptophan synthase alpha chain.